A 267-amino-acid chain; its full sequence is Tetrahydromethanopterin S-methyltransferase subunit C (267 aa).

The next 7 helical transmembrane spans lie at 19–39 (IMALGIVGGLVGIYLGNFAPP), 75–95 (IGMLALGMGILAALFGLSVGG), 97–117 (AGPIVAIVVAAIIGGVIGALA), 140–160 (TLVILGLSVVIAGSFDFASVV), 162–182 (YVVANGYIALIFIIGGMGILH), 198–218 (LMLAVEKGAIALIIAGFASSL), and 221–241 (GLMAAGLNMLIGIIIWYVAFS).

This sequence belongs to the MtrC family. In terms of assembly, the complex is composed of 8 subunits; MtrA, MtrB, MtrC, MtrD, MtrE, MtrF, MtrG and MtrH.

The protein resides in the cell membrane. The enzyme catalyses 5-methyl-5,6,7,8-tetrahydromethanopterin + coenzyme M + 2 Na(+)(in) = 5,6,7,8-tetrahydromethanopterin + methyl-coenzyme M + 2 Na(+)(out). It participates in one-carbon metabolism; methanogenesis from CO(2); methyl-coenzyme M from 5,10-methylene-5,6,7,8-tetrahydromethanopterin: step 2/2. Functionally, part of a complex that catalyzes the formation of methyl-coenzyme M and tetrahydromethanopterin from coenzyme M and methyl-tetrahydromethanopterin. This is an energy-conserving, sodium-ion translocating step. The chain is Tetrahydromethanopterin S-methyltransferase subunit C from Methanosarcina barkeri (strain Fusaro / DSM 804).